Consider the following 104-residue polypeptide: Large ribosomal subunit protein uL24 (104 aa).

Belongs to the universal ribosomal protein uL24 family. As to quaternary structure, part of the 50S ribosomal subunit.

Functionally, one of two assembly initiator proteins, it binds directly to the 5'-end of the 23S rRNA, where it nucleates assembly of the 50S subunit. Its function is as follows. One of the proteins that surrounds the polypeptide exit tunnel on the outside of the subunit. This is Large ribosomal subunit protein uL24 from Shewanella oneidensis (strain ATCC 700550 / JCM 31522 / CIP 106686 / LMG 19005 / NCIMB 14063 / MR-1).